Here is a 71-residue protein sequence, read N- to C-terminus: 26S proteasome complex subunit rpn15 (71 aa).

Positions 1–38 are disordered; that stretch reads MSRAALPSLENLEDDDEFEDFATENWPMKDTELDTGDD. Residues 11–22 show a composition bias toward acidic residues; that stretch reads NLEDDDEFEDFA. The segment at 16–25 is UBS-II; sequence DEFEDFATEN. The UBS-I stretch occupies residues 38 to 49; that stretch reads DTLWENNWDDED.

It belongs to the DSS1/SEM1 family. As to quaternary structure, interacts with mlo3, rae1, nup98/nup189 and nup146. Interacts with rad24. Interacts (via UBSs) with ubiquitin (ubi3/ubi5).

The protein resides in the cytoplasm. The protein localises to the nucleus. In terms of biological role, versatile protein that might stabilize multiple protein complexes involved in diverse pathways. Subunit of the 26S proteasome which plays a role in ubiquitin-dependent proteolysis. Acts as a ubiquitin receptor of the 26S proteasome, by interacting with ubiquitin chains linked by 'Lys-63' and 'Lys-48'. Involved in nuclear export of specific sets of mRNAs. Links the mRNA adapter mlo3 to rae1 for targeting mRNA-protein complex to the proteins of the nucleoporin complex (NPC). Involved in recombinational repair of DNA. Plays a critical role in linking repair and checkpoint factors to damaged DNA sites by specifically recruiting rad24 and cdc25 to the DSBs. The chain is 26S proteasome complex subunit rpn15 (rpn15) from Schizosaccharomyces pombe (strain 972 / ATCC 24843) (Fission yeast).